The chain runs to 100 residues: Urease subunit gamma (100 aa).

This sequence belongs to the urease gamma subunit family. In terms of assembly, heterotrimer of UreA (gamma), UreB (beta) and UreC (alpha) subunits. Three heterotrimers associate to form the active enzyme.

It is found in the cytoplasm. It catalyses the reaction urea + 2 H2O + H(+) = hydrogencarbonate + 2 NH4(+). It functions in the pathway nitrogen metabolism; urea degradation; CO(2) and NH(3) from urea (urease route): step 1/1. The sequence is that of Urease subunit gamma from Prochlorococcus marinus (strain AS9601).